We begin with the raw amino-acid sequence, 647 residues long: Glutamyl-tRNA(Gln) amidotransferase subunit B, mitochondrial (647 aa).

The segment at 87 to 106 (QAKALKKSGHKKKKSSDNQT) is disordered. The segment covering 90–100 (ALKKSGHKKKK) has biased composition (basic residues).

The protein belongs to the GatB/GatE family. GatB subfamily. As to quaternary structure, subunit of the heterotrimeric GatCAB amidotransferase (AdT) complex, composed of A, B and C subunits.

Its subcellular location is the mitochondrion. It catalyses the reaction L-glutamyl-tRNA(Gln) + L-glutamine + ATP + H2O = L-glutaminyl-tRNA(Gln) + L-glutamate + ADP + phosphate + H(+). Functionally, allows the formation of correctly charged Gln-tRNA(Gln) through the transamidation of misacylated Glu-tRNA(Gln) in the mitochondria. The reaction takes place in the presence of glutamine and ATP through an activated gamma-phospho-Glu-tRNA(Gln). The chain is Glutamyl-tRNA(Gln) amidotransferase subunit B, mitochondrial from Neurospora crassa (strain ATCC 24698 / 74-OR23-1A / CBS 708.71 / DSM 1257 / FGSC 987).